The following is a 340-amino-acid chain: Fructoselysine 6-phosphate deglycase (340 aa).

SIS domains lie at 35-169 and 201-331; these read IVEE…RLAP and LGEL…PDER.

Homododecamer.

It catalyses the reaction N(6)-(6-phospho-D-fructosyl)-L-lysine + H2O = D-glucose 6-phosphate + L-lysine. It participates in carbohydrate metabolism; fructoselysine degradation; D-glucose 6-phosphate and lysine from fructoselysine: step 2/2. Strongly inhibited by ZnCl(2). Catalyzes the reversible conversion of fructoselysine 6-phosphate to glucose 6-phosphate and lysine. Functions in a fructoselysine degradation pathway that allows E.coli to grow on fructoselysine or psicoselysine. The sequence is that of Fructoselysine 6-phosphate deglycase from Escherichia coli (strain K12).